Here is a 411-residue protein sequence, read N- to C-terminus: Na(+)-translocating NADH-quinone reductase subunit F (411 aa).

The helical transmembrane segment at Ala6–Ala26 threads the bilayer. A 2Fe-2S ferredoxin-type domain is found at Gly35–Phe129. [2Fe-2S] cluster-binding residues include Cys72, Cys78, Cys81, and Cys113. The FAD-binding FR-type domain maps to Val132 to Lys273.

It belongs to the NqrF family. As to quaternary structure, composed of six subunits; NqrA, NqrB, NqrC, NqrD, NqrE and NqrF. It depends on [2Fe-2S] cluster as a cofactor. FAD serves as cofactor.

It is found in the cell inner membrane. The catalysed reaction is a ubiquinone + n Na(+)(in) + NADH + H(+) = a ubiquinol + n Na(+)(out) + NAD(+). Functionally, NQR complex catalyzes the reduction of ubiquinone-1 to ubiquinol by two successive reactions, coupled with the transport of Na(+) ions from the cytoplasm to the periplasm. The first step is catalyzed by NqrF, which accepts electrons from NADH and reduces ubiquinone-1 to ubisemiquinone by a one-electron transfer pathway. This chain is Na(+)-translocating NADH-quinone reductase subunit F, found in Psychrobacter cryohalolentis (strain ATCC BAA-1226 / DSM 17306 / VKM B-2378 / K5).